Consider the following 38-residue polypeptide: Potassium channel toxin alpha-KTx 6.4 (38 aa).

Intrachain disulfides connect C6–C27, C12–C32, C16–C34, and C22–C37.

It belongs to the short scorpion toxin superfamily. Potassium channel inhibitor family. Alpha-KTx 06 subfamily. Expressed by the venom gland.

The protein localises to the secreted. In terms of biological role, potently, completely and reversibly blocks voltage-gated potassium channel Kv1.2/KCNA2 and Shaker B (Sh). Also blocks small conductance (SK) calcium-activated potassium channel (KCNN). The chain is Potassium channel toxin alpha-KTx 6.4 from Pandinus imperator (Emperor scorpion).